Here is a 136-residue protein sequence, read N- to C-terminus: Nucleoside diphosphate kinase (136 aa).

ATP contacts are provided by Lys-10, Phe-58, Arg-86, Thr-92, Arg-104, and Asn-114. Residue His-117 is the Pros-phosphohistidine intermediate of the active site.

The protein belongs to the NDK family. In terms of assembly, homotetramer. The cofactor is Mg(2+).

Its subcellular location is the cytoplasm. It carries out the reaction a 2'-deoxyribonucleoside 5'-diphosphate + ATP = a 2'-deoxyribonucleoside 5'-triphosphate + ADP. The catalysed reaction is a ribonucleoside 5'-diphosphate + ATP = a ribonucleoside 5'-triphosphate + ADP. In terms of biological role, major role in the synthesis of nucleoside triphosphates other than ATP. The ATP gamma phosphate is transferred to the NDP beta phosphate via a ping-pong mechanism, using a phosphorylated active-site intermediate. The protein is Nucleoside diphosphate kinase of Mycobacterium ulcerans (strain Agy99).